A 111-amino-acid polypeptide reads, in one-letter code: Fertilization-influencing membrane protein (111 aa).

The signal sequence occupies residues 1 to 23; sequence MKLWLWVAVGVWMLMAELGTIET. A helical transmembrane segment spans residues 85 to 105; it reads ILVGTLVVAFFFLLFQFCLHV.

As to expression, testis-specific.

The protein localises to the cell membrane. Its subcellular location is the secreted. Plays a role in sperm-oocyte fusion process during fertilization. The protein is Fertilization-influencing membrane protein of Mus musculus (Mouse).